The primary structure comprises 394 residues: Protein-glutamate methylesterase/protein-glutamine glutaminase 2 (394 aa).

A Response regulatory domain is found at 4-121 (KVLVVDDSSF…ARNRDEAISL (118 aa)). At aspartate 55 the chain carries 4-aspartylphosphate. One can recognise a CheB-type methylesterase domain in the interval 202–394 (SGKKYQLMAI…AERILVEVGR (193 aa)). Catalysis depends on residues serine 214, histidine 241, and aspartate 337.

The protein belongs to the CheB family. Phosphorylated by CheA. Phosphorylation of the N-terminal regulatory domain activates the methylesterase activity.

Its subcellular location is the cytoplasm. The enzyme catalyses [protein]-L-glutamate 5-O-methyl ester + H2O = L-glutamyl-[protein] + methanol + H(+). It catalyses the reaction L-glutaminyl-[protein] + H2O = L-glutamyl-[protein] + NH4(+). Functionally, involved in chemotaxis. Part of a chemotaxis signal transduction system that modulates chemotaxis in response to various stimuli. Catalyzes the demethylation of specific methylglutamate residues introduced into the chemoreceptors (methyl-accepting chemotaxis proteins or MCP) by CheR. Also mediates the irreversible deamidation of specific glutamine residues to glutamic acid. In Photobacterium profundum (strain SS9), this protein is Protein-glutamate methylesterase/protein-glutamine glutaminase 2.